A 337-amino-acid chain; its full sequence is Anthranilate phosphoribosyltransferase (337 aa).

Residues Gly-80, 83 to 84 (GD), Thr-88, 90 to 93 (NIST), 108 to 116 (KHGNRAVSS), and Ser-120 each bind 5-phospho-alpha-D-ribose 1-diphosphate. Gly-80 serves as a coordination point for anthranilate. Ser-92 is a binding site for Mg(2+). Asn-111 is an anthranilate binding site. Anthranilate is bound at residue Arg-166. Asp-224 and Glu-225 together coordinate Mg(2+).

This sequence belongs to the anthranilate phosphoribosyltransferase family. In terms of assembly, homodimer. The cofactor is Mg(2+).

The enzyme catalyses N-(5-phospho-beta-D-ribosyl)anthranilate + diphosphate = 5-phospho-alpha-D-ribose 1-diphosphate + anthranilate. Its pathway is amino-acid biosynthesis; L-tryptophan biosynthesis; L-tryptophan from chorismate: step 2/5. In terms of biological role, catalyzes the transfer of the phosphoribosyl group of 5-phosphorylribose-1-pyrophosphate (PRPP) to anthranilate to yield N-(5'-phosphoribosyl)-anthranilate (PRA). This Anaeromyxobacter dehalogenans (strain 2CP-1 / ATCC BAA-258) protein is Anthranilate phosphoribosyltransferase.